Consider the following 286-residue polypeptide: GTP cyclohydrolase MptA (286 aa).

It belongs to the GTP cyclohydrolase IV family. Homodimer. The cofactor is Fe(2+).

The enzyme catalyses GTP + H2O = 7,8-dihydroneopterin 2',3'-cyclic phosphate + formate + diphosphate + H(+). Its pathway is cofactor biosynthesis; 5,6,7,8-tetrahydromethanopterin biosynthesis. In terms of biological role, converts GTP to 7,8-dihydro-D-neopterin 2',3'-cyclic phosphate, the first intermediate in the biosynthesis of coenzyme methanopterin. The polypeptide is GTP cyclohydrolase MptA (Thermoplasma acidophilum (strain ATCC 25905 / DSM 1728 / JCM 9062 / NBRC 15155 / AMRC-C165)).